Consider the following 541-residue polypeptide: MAKTIAYDEEARRGLERGLNALADAVKVTLGPKGRNVVLEKKWGAPTITNDGVSIAKEIELEDPYEKIGAELVKEVAKKTDDVAGDGTTTATVLAQALVREGLRNVAAGANPLGLKRGIEKAVEKVTETLLKSAKEVETKDQIAATAAISAGDQSIGDLIAEAMDKVGNEGVITVEESNTFGLQLELTEGMRFDKGYISGYFVTDAERQEAVLEDPFILLVSSKVSTVKDLLPLLEKVIQAGKPLLIIAEDVEGEALSTLVVNKIRGTFKSVAVKAPGFGDRRKAMLQDMAILTGGQVISEEVGLSLESADISLLGKARKVVVTKDETTIVEGAGDSDAIAGRVAQIRTEIENSDSDYDREKLQERLAKLAGGVAVIKAGAATEVELKERKHRIEDAVRNAKAAVEEGIVAGGGVALLHAIPALDELKLEGEEATGANIVRVALEAPLKQIAFNGGLEPGVVAEKVRNSPAGTGLNAATGEYEDLLKAGIADPVKVTRSALQNAASIAGLFLTTEAVVADKPEKAAAPAGDPTGGMGGMDF.

Residues 29-32, 86-90, Gly-413, 476-478, and Asp-492 each bind ATP; these read TLGP, DGTTT, and NAA.

This sequence belongs to the chaperonin (HSP60) family. In terms of assembly, forms a cylinder of 14 subunits composed of two heptameric rings stacked back-to-back. Interacts with the co-chaperonin GroES.

The protein resides in the secreted. It localises to the capsule. Its subcellular location is the cell surface. The protein localises to the cell wall. It catalyses the reaction ATP + H2O + a folded polypeptide = ADP + phosphate + an unfolded polypeptide.. Its function is as follows. Together with its co-chaperonin GroES, plays an essential role in assisting protein folding. The GroEL-GroES system forms a nano-cage that allows encapsulation of the non-native substrate proteins and provides a physical environment optimized to promote and accelerate protein folding. The polypeptide is Chaperonin GroEL 2 (Mycolicibacterium paratuberculosis (strain ATCC BAA-968 / K-10) (Mycobacterium paratuberculosis)).